Consider the following 141-residue polypeptide: ATP synthase F(0) complex subunit C3, mitochondrial (141 aa).

Residues 1-66 (MFACAKLART…REFQTSVISR (66 aa)) constitute a mitochondrion transit peptide. A helical membrane pass occupies residues 82–102 (VGVAGSGAGIGTVFGSLIIGY). K109 bears the N6,N6,N6-trimethyllysine mark. A helical transmembrane segment spans residues 117–137 (ILGFALSEAMGLFCLMVAFLI).

Belongs to the ATPase C chain family. F-type ATPases have 2 components, CF(1) - the catalytic core - and CF(0) - the membrane proton channel. CF(1) has five subunits: alpha(3), beta(3), gamma(1), delta(1), epsilon(1). CF(0) has three main subunits: a, b and c. Interacts with TMEM70 and TMEM242. In terms of processing, trimethylated by ATPSCKMT at Lys-109. Methylation is required for proper incorporation of the C subunit into the ATP synthase complex and mitochondrial respiration.

The protein resides in the mitochondrion membrane. In terms of biological role, mitochondrial membrane ATP synthase (F(1)F(0) ATP synthase or Complex V) produces ATP from ADP in the presence of a proton gradient across the membrane which is generated by electron transport complexes of the respiratory chain. F-type ATPases consist of two structural domains, F(1) - containing the extramembraneous catalytic core and F(0) - containing the membrane proton channel, linked together by a central stalk and a peripheral stalk. During catalysis, ATP synthesis in the catalytic domain of F(1) is coupled via a rotary mechanism of the central stalk subunits to proton translocation. Part of the complex F(0) domain. A homomeric c-ring of probably 10 subunits is part of the complex rotary element. The protein is ATP synthase F(0) complex subunit C3, mitochondrial of Mus musculus (Mouse).